The primary structure comprises 336 residues: Glyceraldehyde-3-phosphate dehydrogenase 1 (336 aa).

NAD(+)-binding positions include 13 to 14 (RI) and D35. S59 bears the Phosphoserine mark. Position 80 (R80) interacts with NAD(+). S125 is subject to Phosphoserine. Residues 151–153 (SCT), T182, 211–212 (TG), and R234 contribute to the D-glyceraldehyde 3-phosphate site. The active-site Nucleophile is the C152. NAD(+) is bound at residue N316.

The protein belongs to the glyceraldehyde-3-phosphate dehydrogenase family. In terms of assembly, homotetramer.

It is found in the cytoplasm. It carries out the reaction D-glyceraldehyde 3-phosphate + phosphate + NAD(+) = (2R)-3-phospho-glyceroyl phosphate + NADH + H(+). Its pathway is carbohydrate degradation; glycolysis; pyruvate from D-glyceraldehyde 3-phosphate: step 1/5. The sequence is that of Glyceraldehyde-3-phosphate dehydrogenase 1 (tdh1) from Schizosaccharomyces pombe (strain 972 / ATCC 24843) (Fission yeast).